A 290-amino-acid chain; its full sequence is Proteasome assembly chaperone 1 (290 aa).

The disordered stretch occupies residues 1–39 (MAATFFGEVVKAPCRAGTEDEEEEEEEEGRRETPEDREV). Residue alanine 2 is modified to N-acetylalanine. Threonine 18 carries the phosphothreonine modification. The span at 28-39 (EGRRETPEDREV) shows a compositional bias: basic and acidic residues. Residue threonine 56 is modified to Phosphothreonine. Serine 182 bears the Phosphoserine mark. At lysine 266 the chain carries N6-acetyllysine.

This sequence belongs to the PSMG1 family. As to quaternary structure, forms a heterodimer with PSMG2. The PSMG1-PSMG2 heterodimer interacts directly with the PSMA5 and PSMA7 proteasome alpha subunits. Post-translationally, degraded by the proteasome upon completion of 20S proteasome maturation.

The protein resides in the cytoplasm. It is found in the endoplasmic reticulum. Chaperone protein which promotes assembly of the 20S proteasome as part of a heterodimer with PSMG2. The PSMG1-PSMG2 heterodimer binds to the PSMA5 and PSMA7 proteasome subunits, promotes assembly of the proteasome alpha subunits into the heteroheptameric alpha ring and prevents alpha ring dimerization. The polypeptide is Proteasome assembly chaperone 1 (PSMG1) (Papio anubis (Olive baboon)).